A 402-amino-acid chain; its full sequence is Phytoene synthase 2, chloroplastic (402 aa).

A chloroplast-targeting transit peptide spans 1 to 54 (MAAGSSAVWAAQHPACSGGKFHHLSPSHSHCRPRRALQTPPALPARRSGASPPR). Residues 20-35 (KFHHLSPSHSHCRPRR) are compositionally biased toward basic residues. The disordered stretch occupies residues 20–54 (KFHHLSPSHSHCRPRRALQTPPALPARRSGASPPR). The segment covering 44-54 (PARRSGASPPR) has biased composition (low complexity).

Belongs to the phytoene/squalene synthase family. Expressed in leaves and endosperm.

It localises to the plastid. It is found in the chloroplast. Its subcellular location is the plastoglobule. It carries out the reaction 2 (2E,6E,10E)-geranylgeranyl diphosphate = 15-cis-phytoene + 2 diphosphate. Its function is as follows. Catalyzes the conversion of geranylgeranyl diphosphate to phytoene. Mediates the first committed step in carotenoid biosynthesis. The chain is Phytoene synthase 2, chloroplastic from Zea mays (Maize).